A 400-amino-acid chain; its full sequence is MIGVIGVKRNVDIAIREKLALYPKKHKKYVGELLNSFKEVVILNTCNRTEIYFNCTEEISEDEIFDKIFNVFNWNDDLKKYMFLSKEKRAVTHLMEVICGFHSRILGEDQILGQIKDAYKTAISDNSISSELQKMFEIAIACGKKFKTECKMFEVPVSSVSISINSALLKGCRKFMVLGYGEIGKLAIKHLLSHKVECIYLIVRDKSKASDLEGEIVEVLDFNEKNQVINEVDCIVSCTAAPHTVVRNEDIKTEGDIIHIYDLAVPRDVDKELSEKERVILKDIDEISKIDDKNKKIRKERMEEYKHIVEESIEEFLNWLKIREVSSKIRNIKIRENEICSERIKTFSNKGNGENAKLAERMIKSTADAYVNRAIELLKSEALKGSDSSCAEIIEKIFLT.

Substrate is bound by residues 45–48, S103, 108–110, and Q114; these read TCNR and EDQ. The Nucleophile role is filled by C46. Residue 179–184 coordinates NADP(+); that stretch reads GYGEIG.

It belongs to the glutamyl-tRNA reductase family. In terms of assembly, homodimer.

The enzyme catalyses (S)-4-amino-5-oxopentanoate + tRNA(Glu) + NADP(+) = L-glutamyl-tRNA(Glu) + NADPH + H(+). It participates in porphyrin-containing compound metabolism; protoporphyrin-IX biosynthesis; 5-aminolevulinate from L-glutamyl-tRNA(Glu): step 1/2. Catalyzes the NADPH-dependent reduction of glutamyl-tRNA(Glu) to glutamate 1-semialdehyde (GSA). The sequence is that of Glutamyl-tRNA reductase from Clostridium perfringens (strain 13 / Type A).